The chain runs to 439 residues: Phthalate 4,5-dioxygenase oxygenase subunit (439 aa).

In terms of domain architecture, Rieske spans 27–134 (WTPVCLLEEV…TREWGGFVWA (108 aa)). 4 residues coordinate [2Fe-2S] cluster: Cys-70, His-72, Cys-89, and His-92. The Fe cation site is built by His-181 and His-186.

It belongs to the bacterial ring-hydroxylating dioxygenase alpha subunit family. As to quaternary structure, this dioxygenase system consists of two proteins: phthalate oxygenase and phthalate oxygenase reductase. It depends on [2Fe-2S] cluster as a cofactor. Requires Fe cation as cofactor.

It carries out the reaction phthalate + NADH + O2 + H(+) = cis-4,5-dihydroxycyclohexa-2,6-diene-1,2-dicarboxylate + NAD(+). Its pathway is xenobiotic degradation; phthalate degradation; 3,4-dihydroxybenzoate from phthalate: step 1/3. The chain is Phthalate 4,5-dioxygenase oxygenase subunit (pht3) from Pseudomonas putida (Arthrobacter siderocapsulatus).